A 504-amino-acid chain; its full sequence is Sodium/proline symporter (504 aa).

13 consecutive transmembrane segments (helical) span residues 8–28, 50–70, 73–93, 127–147, 163–183, 189–209, 240–260, 281–301, 324–344, 374–394, 405–425, 434–454, and 461–481; these read LITFTIYIFGMLLIGVLAYYY, SAGASDMSGWLLMGLPGAVYL, LVEGWIAIGLTIGAYFNWLLV, LVSATIILVFLTIYCASGVVA, ALWYGAAATIAYTFIGGFLAV, IQATLMIFALILTPVFVLLSF, LGLLSLAAWGLGYFGQPHILA, WMVLCLAGAIGIGLFAIPYFF, LLFNPWIAGILLSAILAAVMS, ELVWLGRIMVLVIAALAIWIA, VEFAWAGFGSAFGPVVLFSLF, AMAGMLVGAVTVFAWKEVVPA, and VYEMIPGFAFASLAIIVISLL.

Belongs to the sodium:solute symporter (SSF) (TC 2.A.21) family.

Its subcellular location is the cell inner membrane. It carries out the reaction L-proline(in) + Na(+)(in) = L-proline(out) + Na(+)(out). Its function is as follows. Catalyzes the sodium-dependent uptake of extracellular L-proline. This Haemophilus influenzae (strain ATCC 51907 / DSM 11121 / KW20 / Rd) protein is Sodium/proline symporter (putP).